The chain runs to 514 residues: JmjC domain-containing histone demethylation protein 1 (514 aa).

The segment at 4 to 62 (IDTCPICVESPLEDSTTFNNIAWLQCDICNQWFHASCLKIPKIEVNNLHSYHCEGCSKS) adopts a PHD-type zinc-finger fold. The JmjC domain occupies 220 to 384 (SDVDSFGKSF…MHLRIYEIEK (165 aa)). Position 267 (threonine 267) interacts with substrate. Positions 270 and 272 each coordinate Fe cation. Lysine 287 serves as a coordination point for substrate. Histidine 352 serves as a coordination point for Fe cation. A compositionally biased stretch (basic and acidic residues) spans 432-454 (KSEAHSRGEVHTKTETHAVKDEP). Positions 432–456 (KSEAHSRGEVHTKTETHAVKDEPQP) are disordered.

Belongs to the JHDM1 histone demethylase family. Fe(2+) serves as cofactor.

The protein resides in the nucleus. The enzyme catalyses N(6),N(6)-dimethyl-L-lysyl(36)-[histone H3] + 2 2-oxoglutarate + 2 O2 = L-lysyl(36)-[histone H3] + 2 formaldehyde + 2 succinate + 2 CO2. Histone demethylase that specifically demethylates 'Lys-36' of histone H3, thereby playing a central role in histone code. The sequence is that of JmjC domain-containing histone demethylation protein 1 (JHD1) from Debaryomyces hansenii (strain ATCC 36239 / CBS 767 / BCRC 21394 / JCM 1990 / NBRC 0083 / IGC 2968) (Yeast).